A 60-amino-acid chain; its full sequence is LKCNKLIPLAYKTCPAGKDLCYKMYMVSNKTVPVKRGCIDVCPKNSLLVKYECCNTDRCN.

Disulfide bonds link Cys3-Cys21, Cys14-Cys38, Cys42-Cys53, and Cys54-Cys59.

The protein belongs to the three-finger toxin family. Short-chain subfamily. Type IA cytotoxin sub-subfamily. As to quaternary structure, monomer in solution; Homodimer and oligomer in the presence of negatively charged lipids forming a pore with a size ranging between 20 and 30 Angstroms. Expressed by the venom gland.

It is found in the secreted. Its subcellular location is the target cell membrane. Its function is as follows. Shows cytolytic activity on many different cells by forming pore in lipid membranes. In vivo, increases heart rate or kills the animal by cardiac arrest. In addition, it binds to heparin with high affinity, interacts with Kv channel-interacting protein 1 (KCNIP1) in a calcium-independent manner, and binds to integrin alpha-V/beta-3 (ITGAV/ITGB3) with moderate affinity. Preferentially binds acidic phospholipids like phosphatidylserine, phosphatidic acid and phosphatidyl glycerol. Has hemolytic activity towards human erythrocytes (EC(50)=0.171 uM) and cytolytic activity towards various cell lines. In Naja naja (Indian cobra), this protein is Cytotoxin 7.